Reading from the N-terminus, the 494-residue chain is Glutamyl-tRNA(Gln) amidotransferase subunit A (494 aa).

Active-site charge relay system residues include Lys81 and Ser156. Ser180 (acyl-ester intermediate) is an active-site residue.

The protein belongs to the amidase family. GatA subfamily. As to quaternary structure, heterotrimer of A, B and C subunits.

The catalysed reaction is L-glutamyl-tRNA(Gln) + L-glutamine + ATP + H2O = L-glutaminyl-tRNA(Gln) + L-glutamate + ADP + phosphate + H(+). Its function is as follows. Allows the formation of correctly charged Gln-tRNA(Gln) through the transamidation of misacylated Glu-tRNA(Gln) in organisms which lack glutaminyl-tRNA synthetase. The reaction takes place in the presence of glutamine and ATP through an activated gamma-phospho-Glu-tRNA(Gln). The polypeptide is Glutamyl-tRNA(Gln) amidotransferase subunit A (Mycolicibacterium gilvum (strain PYR-GCK) (Mycobacterium gilvum (strain PYR-GCK))).